The sequence spans 177 residues: Mitochondrial inner membrane protease subunit 2 (177 aa).

Residues S41 and K91 contribute to the active site. A helical transmembrane segment spans residues 134 to 152 (TFGPISSGLVIGKAITIVW).

This sequence belongs to the peptidase S26 family. IMP2 subfamily. Component of the mitochondrial inner membrane peptidase (IMP) complex which at least consists of IMP1, IMP2 and SOM1. Post-translationally, the N-terminus is blocked.

It is found in the mitochondrion inner membrane. Functionally, catalytic component of the mitochondrial inner membrane peptidase (IMP) complex. IMP catalyzes the removal of signal peptides required for the targeting of proteins from the mitochondrial matrix, across the inner membrane, into the inter-membrane space. The two catalytic IMP subunits seem to have non-overlapping substrate specificities. IMP2 substrates include nuclear encoded CYB2, mitochondrially encoded COX2 and cytochrome c1. Required for the stability of IMP1. This is Mitochondrial inner membrane protease subunit 2 (IMP2) from Saccharomyces cerevisiae (strain ATCC 204508 / S288c) (Baker's yeast).